The following is a 425-amino-acid chain: Glutamate-1-semialdehyde 2,1-aminomutase (425 aa).

Lys266 carries the N6-(pyridoxal phosphate)lysine modification.

Belongs to the class-III pyridoxal-phosphate-dependent aminotransferase family. HemL subfamily. As to quaternary structure, homodimer. Pyridoxal 5'-phosphate serves as cofactor.

It is found in the cytoplasm. It catalyses the reaction (S)-4-amino-5-oxopentanoate = 5-aminolevulinate. Its pathway is porphyrin-containing compound metabolism; protoporphyrin-IX biosynthesis; 5-aminolevulinate from L-glutamyl-tRNA(Glu): step 2/2. This is Glutamate-1-semialdehyde 2,1-aminomutase from Nitratidesulfovibrio vulgaris (strain DSM 19637 / Miyazaki F) (Desulfovibrio vulgaris).